The sequence spans 170 residues: Glycine cleavage system H protein, mitochondrial (170 aa).

Residues 1 to 45 (MSLRVVRSVRAVACSLRIALASCPPRPWAPSAAAVRSLRTGSALL) constitute a mitochondrion transit peptide. Residues 63–145 (IGTVGISNFA…YEDGWLIKMT (83 aa)) enclose the Lipoyl-binding domain. At K104 the chain carries N6-lipoyllysine.

The protein belongs to the GcvH family. In terms of assembly, the glycine cleavage system is composed of four proteins: P (GLDC), T (GCST), L (DLD) and H (GCSH). Interacts with GLDC. Requires (R)-lipoate as cofactor.

Its subcellular location is the mitochondrion. The glycine cleavage system catalyzes the degradation of glycine. The H protein (GCSH) shuttles the methylamine group of glycine from the P protein (GLDC) to the T protein (GCST). Has a pivotal role in the lipoylation of enzymes involved in cellular energetics such as the mitochondrial dihydrolipoyllysine-residue acetyltransferase component of pyruvate dehydrogenase complex (DLAT), and the mitochondrial dihydrolipoyllysine-residue succinyltransferase component of 2-oxoglutarate dehydrogenase complex (DLST). The chain is Glycine cleavage system H protein, mitochondrial from Rattus norvegicus (Rat).